A 170-amino-acid polypeptide reads, in one-letter code: Neurotensin/neuromedin N (170 aa).

A signal peptide spans 1–23 (MMAGMKIQLVCMILLAFSSWSLC).

This sequence belongs to the neurotensin family. In terms of assembly, interacts with NTSR1. Interacts with SORT1. Interacts with SORL1. In terms of processing, neurotensin is cleaved and degraded by Angiotensin-converting enzyme (ACE) and neprilysin (MME).

Its subcellular location is the secreted. It localises to the cytoplasmic vesicle. The protein localises to the secretory vesicle. Functionally, neurotensin may play an endocrine or paracrine role in the regulation of fat metabolism. It causes contraction of smooth muscle. The polypeptide is Neurotensin/neuromedin N (NTS) (Canis lupus familiaris (Dog)).